Here is a 141-residue protein sequence, read N- to C-terminus: uncharacterized protein (141 aa).

The next 4 membrane-spanning stretches (helical) occupy residues Val-7–Leu-27, Ser-47–Val-67, Ala-75–Phe-95, and Val-106–Ala-126.

It localises to the cell membrane. This is an uncharacterized protein from Bacillus subtilis (strain 168).